Consider the following 149-residue polypeptide: UPF0260 protein Pput_1301 (149 aa).

This sequence belongs to the UPF0260 family.

This Pseudomonas putida (strain ATCC 700007 / DSM 6899 / JCM 31910 / BCRC 17059 / LMG 24140 / F1) protein is UPF0260 protein Pput_1301.